Reading from the N-terminus, the 159-residue chain is Ribosomal RNA large subunit methyltransferase H (159 aa).

Residues leucine 76, glycine 108, and 127 to 132 (FSKMTF) contribute to the S-adenosyl-L-methionine site.

It belongs to the RNA methyltransferase RlmH family. In terms of assembly, homodimer.

The protein resides in the cytoplasm. It catalyses the reaction pseudouridine(1915) in 23S rRNA + S-adenosyl-L-methionine = N(3)-methylpseudouridine(1915) in 23S rRNA + S-adenosyl-L-homocysteine + H(+). Specifically methylates the pseudouridine at position 1915 (m3Psi1915) in 23S rRNA. The protein is Ribosomal RNA large subunit methyltransferase H of Geobacillus sp. (strain WCH70).